Consider the following 60-residue polypeptide: Small, acid-soluble spore protein H (60 aa).

The protein belongs to the SspH family.

It localises to the spore core. In Halalkalibacterium halodurans (strain ATCC BAA-125 / DSM 18197 / FERM 7344 / JCM 9153 / C-125) (Bacillus halodurans), this protein is Small, acid-soluble spore protein H.